A 967-amino-acid chain; its full sequence is RNA polymerase-associated protein RapA (967 aa).

The 170-residue stretch at glutamate 163–aspartate 332 folds into the Helicase ATP-binding domain. Aspartate 176 to threonine 183 lines the ATP pocket. Residues aspartate 278–histidine 281 carry the DEAH box motif. Positions arginine 491–glycine 639 constitute a Helicase C-terminal domain.

Belongs to the SNF2/RAD54 helicase family. RapA subfamily. As to quaternary structure, interacts with the RNAP. Has a higher affinity for the core RNAP than for the holoenzyme. Its ATPase activity is stimulated by binding to RNAP.

In terms of biological role, transcription regulator that activates transcription by stimulating RNA polymerase (RNAP) recycling in case of stress conditions such as supercoiled DNA or high salt concentrations. Probably acts by releasing the RNAP, when it is trapped or immobilized on tightly supercoiled DNA. Does not activate transcription on linear DNA. Probably not involved in DNA repair. The polypeptide is RNA polymerase-associated protein RapA (Shewanella amazonensis (strain ATCC BAA-1098 / SB2B)).